The primary structure comprises 214 residues: Adenylate kinase (214 aa).

Residue 10-15 (GAGKGT) participates in ATP binding. The segment at 30 to 59 (STGDMLRAAIKAGTELGLKAKAVMDAGQLV) is NMP. Residues Thr31, Arg36, 57–59 (QLV), 85–88 (GFPR), and Gln92 each bind AMP. The segment at 122–159 (GRRVHSGSGRTYHVVFNPPKVEGKDDVTGEDLVIRADD) is LID. ATP is bound by residues Arg123 and 132 to 133 (TY). AMP is bound by residues Arg156 and Arg167. Gln200 lines the ATP pocket.

Belongs to the adenylate kinase family. As to quaternary structure, monomer.

The protein resides in the cytoplasm. It catalyses the reaction AMP + ATP = 2 ADP. It participates in purine metabolism; AMP biosynthesis via salvage pathway; AMP from ADP: step 1/1. Its function is as follows. Catalyzes the reversible transfer of the terminal phosphate group between ATP and AMP. Plays an important role in cellular energy homeostasis and in adenine nucleotide metabolism. This is Adenylate kinase from Aeromonas hydrophila subsp. hydrophila (strain ATCC 7966 / DSM 30187 / BCRC 13018 / CCUG 14551 / JCM 1027 / KCTC 2358 / NCIMB 9240 / NCTC 8049).